Reading from the N-terminus, the 471-residue chain is MGIRIYNDLTRKKEDFVPLEPGKVRFYNCGPTVYDYFHIGNARNFVVFDTVRRYLEYRGYQVTFVQNFTDIDDRMIKRARERGITVSELAEEMIQAYFADAGALGVRPADVHPRATALIDEQIAMIQQLIDKGHAYVVEGGDVYFRVTTSPDYGKLSHKNLEELVAGASERVDPDDRKEHPFDFALWKGQKPGEPAWPAPWGPGRPGWHIECSAMARKYLGDTIDIHAGGEDLTFPHHENEIAQSEAVTGKPFARYWMHNAHLMIDGAKMSKSVGNFFTVRDILKRYDGEVVRMFLLSAHYRTQLSFSDQLMEDTRRALERLYNTVANLEHLAKTAPRAEMTAEEQAVLAELSQARERFVAAMDDDFNTAEGLAVIFDLSRELNSRVKPGASAAFAEGGLALLRELAGVLGLLERKAQPQELDAEIEALIAARQEARKARNFAEADRIRDQLRAMGIILEDTPQGVRWRRA.

Cysteine 29 lines the Zn(2+) pocket. A 'HIGH' region motif is present at residues 31-41; that stretch reads PTVYDYFHIGN. Zn(2+) is bound by residues cysteine 212, histidine 237, and glutamate 241. The 'KMSKS' region motif lies at 269–273; that stretch reads KMSKS. Lysine 272 provides a ligand contact to ATP.

It belongs to the class-I aminoacyl-tRNA synthetase family. In terms of assembly, monomer. Requires Zn(2+) as cofactor.

The protein localises to the cytoplasm. The enzyme catalyses tRNA(Cys) + L-cysteine + ATP = L-cysteinyl-tRNA(Cys) + AMP + diphosphate. In Symbiobacterium thermophilum (strain DSM 24528 / JCM 14929 / IAM 14863 / T), this protein is Cysteine--tRNA ligase.